A 58-amino-acid chain; its full sequence is Potassium channel toxin Ts16 (58 aa).

A signal peptide spans 1 to 16 (MHSSVFILILFSLAVI). Intrachain disulfides connect cysteine 29/cysteine 51, cysteine 34/cysteine 47, and cysteine 38/cysteine 53.

In terms of tissue distribution, expressed by the venom gland.

Its subcellular location is the secreted. Its function is as follows. Blocks potassium channels. The protein is Potassium channel toxin Ts16 of Tityus serrulatus (Brazilian scorpion).